Reading from the N-terminus, the 400-residue chain is MKIKQAMQEISRGCVEFIGEEYIRDLVERFYNTGERFCVKAGFDPTAPDLHLGHTVLLQKLATFQRYGGDVKFLIGDFTATIGDPSGKSETRKPLSAEQVKANALTYKEQVFKVLDPQYTQICFNSKWLNELGALGLITLTSHFSVARMLERDDFTKRYNNNQSISIVEFIYPLLQGYDSVALNCDIELGGNDQKFNLLVGRSLQRAYKLNKEQSVMTLPLLEGLDGVHKMSKSLNNYIGVTESANTMYAKILSINDEMMWRYYELLSSLSLQEIVMLKEQVNTGNAHPKAVKEQLALEITTRYHNIDLAKQAKIAFDNVFSKDEIPTDLAVFTCNEGEWIARVLVIAGLCESTSQARRDIRAGALKINKEKIMNEELKLSVGEYIVQIGKRRFAKVIIS.

The short motif at 45–54 is the 'HIGH' region element; that stretch reads PTAPDLHLGH. A 'KMSKS' region motif is present at residues 230–234; the sequence is KMSKS. Residue lysine 233 participates in ATP binding. In terms of domain architecture, S4 RNA-binding spans 339–399; sequence EWIARVLVIA…GKRRFAKVII (61 aa).

Belongs to the class-I aminoacyl-tRNA synthetase family. TyrS type 2 subfamily. As to quaternary structure, homodimer.

It is found in the cytoplasm. It catalyses the reaction tRNA(Tyr) + L-tyrosine + ATP = L-tyrosyl-tRNA(Tyr) + AMP + diphosphate + H(+). In terms of biological role, catalyzes the attachment of tyrosine to tRNA(Tyr) in a two-step reaction: tyrosine is first activated by ATP to form Tyr-AMP and then transferred to the acceptor end of tRNA(Tyr). In Helicobacter hepaticus (strain ATCC 51449 / 3B1), this protein is Tyrosine--tRNA ligase.